The following is a 73-amino-acid chain: Protein RALF-like 10 (73 aa).

An N-terminal signal peptide occupies residues 1–17 (MKALVICLLVIFAAVIA). Disulfide bonds link Cys-35-Cys-44 and Cys-64-Cys-70.

It belongs to the plant rapid alkalinization factor (RALF) family. As to expression, expressed in flowers.

The protein localises to the secreted. Functionally, cell signaling peptide that may regulate plant stress, growth, and development. Mediates a rapid alkalinization of extracellular space by mediating a transient increase in the cytoplasmic Ca(2+) concentration leading to a calcium-dependent signaling events through a cell surface receptor and a concomitant activation of some intracellular mitogen-activated protein kinases. In Arabidopsis thaliana (Mouse-ear cress), this protein is Protein RALF-like 10 (RALFL10).